Reading from the N-terminus, the 603-residue chain is NADH-ubiquinone oxidoreductase chain 5 (603 aa).

16 helical membrane-spanning segments follow: residues 4–24, 38–58, 89–109, 122–142, 171–191, 211–233, 241–261, 273–293, 301–320, 325–347, 366–386, 405–424, 457–477, 488–508, 524–544, and 582–602; these read FTTM…ATLI, TAIA…ICLG, FLPV…WYMA, LIFL…QLFI, AILY…WFLL, LPLL…HPWL, TPVS…FLLI, IQTL…ICAL, IVAF…IGIN, ALLH…GSII, MPLT…MPFL, NTWA…AYST, LMLG…PMSL, LAAL…NYLA, IMLG…SLLM, and GLIK…LLMI.

The protein belongs to the complex I subunit 5 family. Core subunit of respiratory chain NADH dehydrogenase (Complex I) which is composed of 45 different subunits.

The protein localises to the mitochondrion inner membrane. The enzyme catalyses a ubiquinone + NADH + 5 H(+)(in) = a ubiquinol + NAD(+) + 4 H(+)(out). In terms of biological role, core subunit of the mitochondrial membrane respiratory chain NADH dehydrogenase (Complex I) which catalyzes electron transfer from NADH through the respiratory chain, using ubiquinone as an electron acceptor. Essential for the catalytic activity and assembly of complex I. In Pongo abelii (Sumatran orangutan), this protein is NADH-ubiquinone oxidoreductase chain 5 (MT-ND5).